Consider the following 303-residue polypeptide: Caspase-7 (303 aa).

Positions 1-27 are disordered; the sequence is MADDQNCAPELEKADPSGEDGVDAKPD. At Ala-2 the chain carries N-acetylalanine. Residues 2–23 constitute a propeptide, N-terminally processed; it reads ADDQNCAPELEKADPSGEDGVD. Basic and acidic residues predominate over residues 10 to 27; it reads ELEKADPSGEDGVDAKPD. Residue Ser-30 is modified to Phosphoserine. The exosite stretch occupies residues 38 to 41; the sequence is KKKK. A loop L1 region spans residues 76 to 87; sequence KNFDKVTGMDVR. His-144 is a catalytic residue. The residue at position 173 (Thr-173) is a Phosphothreonine. Residue Cys-186 is part of the active site. The tract at residues 187 to 196 is loop L2; it reads RGTELDDGVQ. A propeptide spanning residues 199-206 is cleaved from the precursor; the sequence is SGPINETD. The tract at residues 226–238 is loop L3; sequence VPGYYSWRNPGKG. A Phosphoserine modification is found at Ser-239. The segment at 274–288 is loop L4; sequence ESQCDDPCFNEKKQI.

Belongs to the peptidase C14A family. Heterotetramer that consists of two anti-parallel arranged heterodimers, each one formed by a 20 kDa (p20) and a 11 kDa (p11) subunit. Interacts with XIAP (via its second BIR domain); inhibiting CASP7 activity. Interacts with BIRC6/bruce. Interacts with ATXN3 (short isoform 1). Interacts with HSPA5. In terms of processing, cleavage by different proteases, such as granzyme B (GZMB), caspase-1 (CASP1), caspase-8 (CASP8) or caspase-9 (CASP9) generate the two active subunits. Its involvement in different programmed cell death processes is probably specified by the protease that activates CASP7. Cleaved and activated by initiator caspases (CASP8 and/or CASP9), leading to execution phase of apoptosis. Cleavage and maturation by GZMB regulates granzyme-mediated programmed cell death. Cleaved and activated by CASP1 in response to bacterial infection. Propeptide domains can also be cleaved efficiently by CASP3. Active heterodimers between the small subunit of caspase-7 and the large subunit of CASP3, and vice versa, also occur. Also cleaved at the N-terminus at alternative sites by CAPN1, leading to its activation. Post-translationally, phosphorylation at Ser-30 and Ser-239 by PAK2 inhibits its activity. Phosphorylation at Ser-30 prevents cleavage and activation by initiator caspase CASP9, while phosphorylation at Ser-239 prevents thiol protease activity by preventing substrate-binding. Ubiquitinated by BIRC6; this activity is inhibited by DIABLO/SMAC.

The protein resides in the cytoplasm. Its subcellular location is the cytosol. It is found in the nucleus. It localises to the secreted. The protein localises to the extracellular space. The enzyme catalyses Strict requirement for an Asp residue at position P1 and has a preferred cleavage sequence of Asp-Glu-Val-Asp-|-.. Its activity is regulated as follows. During activation, the N-terminal disordered prodomain is removed by cleavage. Concomitantly, double cleavage gives rise to a large Caspase-7 subunit p20 and a small Caspase-7 subunit p11. The two large and two small subunits then assemble to form the active CASP7 complex. Can be cleaved and activated by different caspases, depending on the context. Cleaved and activated by initiator caspases (CASP8 and/or CASP9), leading to execution phase of apoptosis. Cleavage and maturation by GZMB regulates granzyme-mediated programmed cell death. Cleavage and maturation by CASP1 regulates pyroptosis. Inhibited by XIAP, which directly binds to the active site pocket and obstructs substrate entry. Phosphorylation at Ser-30 and Ser-239 by PAK2 inhibits its activity. Inhibited by BIRC6; following inhibition of BIRC6-caspase binding by DIABLO/SMAC, BIRC6 is subjected to caspase cleavage, leading to an increase in active caspases. In terms of biological role, thiol protease involved in different programmed cell death processes, such as apoptosis, pyroptosis or granzyme-mediated programmed cell death, by proteolytically cleaving target proteins. Has a marked preference for Asp-Glu-Val-Asp (DEVD) consensus sequences, with some plasticity for alternate non-canonical sequences. Its involvement in the different programmed cell death processes is probably determined by upstream proteases that activate CASP7. Acts as an effector caspase involved in the execution phase of apoptosis: following cleavage and activation by initiator caspases (CASP8 and/or CASP9), mediates execution of apoptosis by catalyzing cleavage of proteins, such as CLSPN, PARP1, PTGES3 and YY1. Compared to CASP3, acts as a minor executioner caspase and cleaves a limited set of target proteins. Acts as a key regulator of the inflammatory response in response to bacterial infection by catalyzing cleavage and activation of the sphingomyelin phosphodiesterase SMPD1 in the extracellular milieu, thereby promoting membrane repair. Regulates pyroptosis in intestinal epithelial cells: cleaved and activated by CASP1 in response to S.typhimurium infection, promoting its secretion to the extracellular milieu, where it catalyzes activation of SMPD1, generating ceramides that repair membranes and counteract the action of gasdermin-D (GSDMD) pores. Regulates granzyme-mediated programmed cell death in hepatocytes: cleaved and activated by granzyme B (GZMB) in response to bacterial infection, promoting its secretion to the extracellular milieu, where it catalyzes activation of SMPD1, generating ceramides that repair membranes and counteract the action of perforin (PRF1) pores. Following cleavage by CASP1 in response to inflammasome activation, catalyzes processing and inactivation of PARP1, alleviating the transcription repressor activity of PARP1. Acts as an inhibitor of type I interferon production during virus-induced apoptosis by mediating cleavage of antiviral proteins CGAS, IRF3 and MAVS, thereby preventing cytokine overproduction. Cleaves and activates sterol regulatory element binding proteins (SREBPs). Cleaves phospholipid scramblase proteins XKR4, XKR8 and XKR9. Cleaves BIRC6 following inhibition of BIRC6-caspase binding by DIABLO/SMAC. In Mesocricetus auratus (Golden hamster), this protein is Caspase-7 (CASP7).